The primary structure comprises 253 residues: Phosphoribosylaminoimidazole-succinocarboxamide synthase (253 aa).

It belongs to the SAICAR synthetase family.

The enzyme catalyses 5-amino-1-(5-phospho-D-ribosyl)imidazole-4-carboxylate + L-aspartate + ATP = (2S)-2-[5-amino-1-(5-phospho-beta-D-ribosyl)imidazole-4-carboxamido]succinate + ADP + phosphate + 2 H(+). The protein operates within purine metabolism; IMP biosynthesis via de novo pathway; 5-amino-1-(5-phospho-D-ribosyl)imidazole-4-carboxamide from 5-amino-1-(5-phospho-D-ribosyl)imidazole-4-carboxylate: step 1/2. The chain is Phosphoribosylaminoimidazole-succinocarboxamide synthase from Jannaschia sp. (strain CCS1).